Reading from the N-terminus, the 374-residue chain is tRNA-specific 2-thiouridylase MnmA (374 aa).

Residues 12–19 (GMSGGVDS) and Met38 contribute to the ATP site. An interaction with target base in tRNA region spans residues 98 to 100 (NPD). Cys103 functions as the Nucleophile in the catalytic mechanism. Residues Cys103 and Cys207 are joined by a disulfide bond. ATP is bound at residue Gly128. An interaction with tRNA region spans residues 157 to 159 (KDQ). Cys207 functions as the Cysteine persulfide intermediate in the catalytic mechanism. The interaction with tRNA stretch occupies residues 321-322 (RY).

The protein belongs to the MnmA/TRMU family.

Its subcellular location is the cytoplasm. It catalyses the reaction S-sulfanyl-L-cysteinyl-[protein] + uridine(34) in tRNA + AH2 + ATP = 2-thiouridine(34) in tRNA + L-cysteinyl-[protein] + A + AMP + diphosphate + H(+). Functionally, catalyzes the 2-thiolation of uridine at the wobble position (U34) of tRNA, leading to the formation of s(2)U34. The chain is tRNA-specific 2-thiouridylase MnmA from Aliivibrio fischeri (strain ATCC 700601 / ES114) (Vibrio fischeri).